We begin with the raw amino-acid sequence, 828 residues long: Translation initiation factor IF-2 (828 aa).

Disordered stretches follow at residues 48–76 (SYSGSTTTLSLNKEKGSLETGSSSGSEEF) and 112–137 (ASQEDPIEVEQEESSDTNKVKEEPKI). Polar residues predominate over residues 49-58 (YSGSTTTLSL). Residues 65 to 74 (LETGSSSGSE) show a composition bias toward low complexity. Acidic residues predominate over residues 116–126 (DPIEVEQEESS). The segment covering 127–137 (DTNKVKEEPKI) has biased composition (basic and acidic residues). The tr-type G domain maps to 326–496 (SRAPVVTVMG…LLIAEMQNLK (171 aa)). The G1 stretch occupies residues 335-342 (GHVDHGKT). GTP is bound at residue 335-342 (GHVDHGKT). Residues 360–364 (GITQH) form a G2 region. The G3 stretch occupies residues 382–385 (DTPG). Residues 382 to 386 (DTPGH) and 436 to 439 (NKID) contribute to the GTP site. Residues 436–439 (NKID) are G4. Residues 472–474 (SAL) form a G5 region.

This sequence belongs to the TRAFAC class translation factor GTPase superfamily. Classic translation factor GTPase family. IF-2 subfamily.

It localises to the cytoplasm. Its function is as follows. One of the essential components for the initiation of protein synthesis. Protects formylmethionyl-tRNA from spontaneous hydrolysis and promotes its binding to the 30S ribosomal subunits. Also involved in the hydrolysis of GTP during the formation of the 70S ribosomal complex. This chain is Translation initiation factor IF-2, found in Rickettsia bellii (strain RML369-C).